The chain runs to 385 residues: 4-hydroxy-3-methylbut-2-en-1-yl diphosphate synthase (flavodoxin) (385 aa).

[4Fe-4S] cluster-binding residues include C282, C285, C317, and E324.

It belongs to the IspG family. It depends on [4Fe-4S] cluster as a cofactor.

It carries out the reaction (2E)-4-hydroxy-3-methylbut-2-enyl diphosphate + oxidized [flavodoxin] + H2O + 2 H(+) = 2-C-methyl-D-erythritol 2,4-cyclic diphosphate + reduced [flavodoxin]. The protein operates within isoprenoid biosynthesis; isopentenyl diphosphate biosynthesis via DXP pathway; isopentenyl diphosphate from 1-deoxy-D-xylulose 5-phosphate: step 5/6. Functionally, converts 2C-methyl-D-erythritol 2,4-cyclodiphosphate (ME-2,4cPP) into 1-hydroxy-2-methyl-2-(E)-butenyl 4-diphosphate. The protein is 4-hydroxy-3-methylbut-2-en-1-yl diphosphate synthase (flavodoxin) of Nocardia farcinica (strain IFM 10152).